We begin with the raw amino-acid sequence, 136 residues long: Large-conductance mechanosensitive channel (136 aa).

Transmembrane regions (helical) follow at residues 10 to 30 (FAMR…AAFG) and 76 to 96 (GVFI…FMAI).

It belongs to the MscL family. Homopentamer.

It localises to the cell inner membrane. Channel that opens in response to stretch forces in the membrane lipid bilayer. May participate in the regulation of osmotic pressure changes within the cell. The sequence is that of Large-conductance mechanosensitive channel from Escherichia coli O127:H6 (strain E2348/69 / EPEC).